Reading from the N-terminus, the 164-residue chain is Putative F-box protein At1g59675 (164 aa).

An F-box domain is found at 9–56; it reads SQSDHVPLDLTIEILSRLPAKSVGRFRSVSKLWSANTTSQNFINSFAT.

This is Putative F-box protein At1g59675 from Arabidopsis thaliana (Mouse-ear cress).